Reading from the N-terminus, the 448-residue chain is SVP1-like protein 2 (448 aa).

Residues N61, N155, N256, N280, N315, and N421 are each glycosylated (N-linked (GlcNAc...) asparagine). 2 WD repeats span residues 222-262 (AHKN…LIKE) and 267-306 (VDKADIYEMSFSPNGSKLAVLSNKQTLHIFQIFETTNTET). Residues 416-435 (THYSLNESLRNEDTKSAGEP) form a disordered region. Positions 424-435 (LRNEDTKSAGEP) are enriched in basic and acidic residues.

It belongs to the WD repeat PROPPIN family. In terms of processing, N-glycosylated.

Its subcellular location is the endosome membrane. It is found in the prevacuolar compartment membrane. Involved in piecemeal microautophagy of the nucleus (micronucleophagy). This is SVP1-like protein 2 (HSV2) from Saccharomyces cerevisiae (strain ATCC 204508 / S288c) (Baker's yeast).